The sequence spans 130 residues: Small ribosomal subunit protein uS8 (130 aa).

It belongs to the universal ribosomal protein uS8 family. As to quaternary structure, component of the small ribosomal subunit (SSU). Mature N.crassa ribosomes consist of a small (40S) and a large (60S) subunit. The 40S small subunit contains 1 molecule of ribosomal RNA (18S rRNA) and at least 32 different proteins. The large 60S subunit contains 3 rRNA molecules (26S, 5.8S and 5S rRNA) and at least 42 different proteins.

The protein localises to the cytoplasm. In terms of biological role, component of the ribosome, a large ribonucleoprotein complex responsible for the synthesis of proteins in the cell. The small ribosomal subunit (SSU) binds messenger RNAs (mRNAs) and translates the encoded message by selecting cognate aminoacyl-transfer RNA (tRNA) molecules. The large subunit (LSU) contains the ribosomal catalytic site termed the peptidyl transferase center (PTC), which catalyzes the formation of peptide bonds, thereby polymerizing the amino acids delivered by tRNAs into a polypeptide chain. The nascent polypeptides leave the ribosome through a tunnel in the LSU and interact with protein factors that function in enzymatic processing, targeting, and the membrane insertion of nascent chains at the exit of the ribosomal tunnel. This Neurospora crassa (strain ATCC 24698 / 74-OR23-1A / CBS 708.71 / DSM 1257 / FGSC 987) protein is Small ribosomal subunit protein uS8 (crp-27).